The primary structure comprises 1369 residues: DNA-directed RNA polymerase subunit beta (1369 aa).

This sequence belongs to the RNA polymerase beta chain family. The RNAP catalytic core consists of 2 alpha, 1 beta, 1 beta' and 1 omega subunit. When a sigma factor is associated with the core the holoenzyme is formed, which can initiate transcription.

The enzyme catalyses RNA(n) + a ribonucleoside 5'-triphosphate = RNA(n+1) + diphosphate. In terms of biological role, DNA-dependent RNA polymerase catalyzes the transcription of DNA into RNA using the four ribonucleoside triphosphates as substrates. The polypeptide is DNA-directed RNA polymerase subunit beta (Solidesulfovibrio magneticus (strain ATCC 700980 / DSM 13731 / RS-1) (Desulfovibrio magneticus)).